A 64-amino-acid chain; its full sequence is DNA gyrase inhibitor YacG (64 aa).

Zn(2+) contacts are provided by Cys9, Cys12, Cys28, and Cys32. Residues 45–64 (KRIPSSGDLSESDDWSEEQK) are disordered. A compositionally biased stretch (acidic residues) spans 54–64 (SESDDWSEEQK).

It belongs to the DNA gyrase inhibitor YacG family. As to quaternary structure, interacts with GyrB. Requires Zn(2+) as cofactor.

Functionally, inhibits all the catalytic activities of DNA gyrase by preventing its interaction with DNA. Acts by binding directly to the C-terminal domain of GyrB, which probably disrupts DNA binding by the gyrase. The protein is DNA gyrase inhibitor YacG of Citrobacter koseri (strain ATCC BAA-895 / CDC 4225-83 / SGSC4696).